A 274-amino-acid chain; its full sequence is 2,3,4,5-tetrahydropyridine-2,6-dicarboxylate N-succinyltransferase (274 aa).

Residues R107 and D144 each coordinate substrate.

The protein belongs to the transferase hexapeptide repeat family. Homotrimer.

Its subcellular location is the cytoplasm. It carries out the reaction (S)-2,3,4,5-tetrahydrodipicolinate + succinyl-CoA + H2O = (S)-2-succinylamino-6-oxoheptanedioate + CoA. The protein operates within amino-acid biosynthesis; L-lysine biosynthesis via DAP pathway; LL-2,6-diaminopimelate from (S)-tetrahydrodipicolinate (succinylase route): step 1/3. This chain is 2,3,4,5-tetrahydropyridine-2,6-dicarboxylate N-succinyltransferase, found in Paracoccus denitrificans (strain Pd 1222).